Here is a 261-residue protein sequence, read N- to C-terminus: Imidazole glycerol phosphate synthase subunit HisF (261 aa).

Active-site residues include aspartate 11 and aspartate 130.

This sequence belongs to the HisA/HisF family. As to quaternary structure, heterodimer of HisH and HisF.

The protein resides in the cytoplasm. The catalysed reaction is 5-[(5-phospho-1-deoxy-D-ribulos-1-ylimino)methylamino]-1-(5-phospho-beta-D-ribosyl)imidazole-4-carboxamide + L-glutamine = D-erythro-1-(imidazol-4-yl)glycerol 3-phosphate + 5-amino-1-(5-phospho-beta-D-ribosyl)imidazole-4-carboxamide + L-glutamate + H(+). The protein operates within amino-acid biosynthesis; L-histidine biosynthesis; L-histidine from 5-phospho-alpha-D-ribose 1-diphosphate: step 5/9. Its function is as follows. IGPS catalyzes the conversion of PRFAR and glutamine to IGP, AICAR and glutamate. The HisF subunit catalyzes the cyclization activity that produces IGP and AICAR from PRFAR using the ammonia provided by the HisH subunit. The polypeptide is Imidazole glycerol phosphate synthase subunit HisF (Limosilactobacillus fermentum (strain NBRC 3956 / LMG 18251) (Lactobacillus fermentum)).